Here is a 236-residue protein sequence, read N- to C-terminus: Small ribosomal subunit protein uS2c (236 aa).

It belongs to the universal ribosomal protein uS2 family.

Its subcellular location is the plastid. The protein resides in the chloroplast. The chain is Small ribosomal subunit protein uS2c (rps2) from Lotus japonicus (Lotus corniculatus var. japonicus).